The chain runs to 767 residues: Cadherin-5 (767 aa).

An N-terminal signal peptide occupies residues 1–29; that stretch reads MMKQCARRQMTEPVFRVAVLLALCSLSIG. The propeptide occupies 30–51; that stretch reads VDVHQAQKTPSISSAALQRHKR. Residues 30 to 593 are Extracellular-facing; sequence VDVHQAQKTP…SYARTGMSVS (564 aa). Ca(2+) contacts are provided by Glu62, Glu63, Asp113, and Glu115. Cadherin domains are found at residues 86–155, 155–261, 262–373, 374–475, and 475–581; these read RYIL…IPVF, FDSD…IATF, KKER…PPIF, NQTE…APEL, and LTNG…RVEY. N-linked (GlcNAc...) asparagine glycosylation is present at Asn121. Asp147, Ile148, Asn149, Asp150, Asn151, Asp180, and Asp182 together coordinate Ca(2+). Asn197 carries an N-linked (GlcNAc...) asparagine glycan. Residue Asp233 coordinates Ca(2+). Asn374, Asn477, and Asn518 each carry an N-linked (GlcNAc...) asparagine glycan. A helical membrane pass occupies residues 594 to 614; the sequence is ALLAILLCIITILVIVILIVL. Residues 615–767 lie on the Cytoplasmic side of the membrane; sequence RRRYQKEVLV…VDGSDSDSSY (153 aa).

It localises to the cell membrane. Its subcellular location is the cell junction. It is found in the adherens junction. In terms of biological role, cadherins are calcium-dependent cell adhesion proteins. They preferentially interact with themselves in a homophilic manner in connecting cells; cadherins may thus contribute to the sorting of heterogeneous cell types. Required for embryonic cardiac looping and heart chamber development, via promotion of cell-cell junction formation and subsequent attachment between the endothelial and myocardial layers of the heart. Required for the directional migration and delamination of endothelial cell monolayers, by which common cardinal veins form via the lumen ensheathment mechanism of vessel development as they migrate and connect with the heart inflow tract. Required for the formation of filopodia extensions (sprouts) at the initiation of intersegmental vessel development, by acting (via its C-terminus) to facilitate anchoring of the actin cytoskeleton to cell junctions in endothelial cells. Then positively regulates dorsal migration of stalk cells and sprout outgrowth towards the dorsal longitudinal anastomotic vessels (DLAV) via endothelial cell elongation. Following contact with the DLAV, required for intersegmental vessel lumen formation, potentially via facilitating the formation and/or extension of endothelial cell tight junctions that are required during tubulogenesis. The sequence is that of Cadherin-5 from Danio rerio (Zebrafish).